The primary structure comprises 194 residues: MSAITITDAAHDYLADLLSKQNTPGIGIRIFITQPGTQYAETCIAYCKPGEEKPDDEPVGLKSFTAYLDAVSVPFLEDALVDYATDRMGGQLTIKAPNAKVPMVNEDSPINERINYYLQTEINPGLASHGGAVSLVDVVDDGIAVLQFGGGCQGCGQADVTLKEGIERTLLERIPELKGVRDVTDHTNKENAYY.

Cysteine 152 and cysteine 155 together coordinate [4Fe-4S] cluster.

It belongs to the NfuA family. As to quaternary structure, homodimer. [4Fe-4S] cluster serves as cofactor.

Functionally, involved in iron-sulfur cluster biogenesis. Binds a 4Fe-4S cluster, can transfer this cluster to apoproteins, and thereby intervenes in the maturation of Fe/S proteins. Could also act as a scaffold/chaperone for damaged Fe/S proteins. The sequence is that of Fe/S biogenesis protein NfuA from Pseudomonas entomophila (strain L48).